The chain runs to 104 residues: Cell division protein FtsL (104 aa).

The Cytoplasmic segment spans residues 1–19; that stretch reads MSTPNTHLLCLIATDLRKH. The chain crosses the membrane as a helical span at residues 20-39; it reads FFAVLVGMLIVCSAIYNVYT. Residues 40–104 lie on the Periplasmic side of the membrane; the sequence is THKTRGLVTQ…KKNSVLVELR (65 aa).

This sequence belongs to the FtsL family. As to quaternary structure, part of a complex composed of FtsB, FtsL and FtsQ.

The protein resides in the cell inner membrane. Its function is as follows. Essential cell division protein. May link together the upstream cell division proteins, which are predominantly cytoplasmic, with the downstream cell division proteins, which are predominantly periplasmic. The sequence is that of Cell division protein FtsL from Psychromonas ingrahamii (strain DSM 17664 / CCUG 51855 / 37).